Consider the following 247-residue polypeptide: Ribosomal RNA large subunit methyltransferase E (247 aa).

Positions 99, 101, 123, 139, and 162 each coordinate S-adenosyl-L-methionine. Lysine 202 (proton acceptor) is an active-site residue.

The protein belongs to the class I-like SAM-binding methyltransferase superfamily. RNA methyltransferase RlmE family.

The protein localises to the cytoplasm. The enzyme catalyses uridine(2552) in 23S rRNA + S-adenosyl-L-methionine = 2'-O-methyluridine(2552) in 23S rRNA + S-adenosyl-L-homocysteine + H(+). In terms of biological role, specifically methylates the uridine in position 2552 of 23S rRNA at the 2'-O position of the ribose in the fully assembled 50S ribosomal subunit. The protein is Ribosomal RNA large subunit methyltransferase E of Anaplasma phagocytophilum (strain HZ).